The sequence spans 372 residues: MKLLSLHVQDFRNLAAVELAPSPRATVLLGENGQGKTNLLEAIYFLTTLKPLRAVRLAELVRFGAADAAVAGDFEGPGGVRRVAVQVAAGGRTASLDGKALGSGARLDDYFEGLASVCFSPDDLLLVKAGPDGRRRFLDRAAFNRWPAVLGEAREYVRALRARNAALRSGTAEVEASFREPLVRAGARLLVRRRDLVAELAPRLRAAFAEISGPAAPEADLAYRAAGGVEVGHPEAEVAARLARALETRLERDREKGFTSAGPHMDDLVLALGGKGARLYGSQGQQRALVLALKIAEIENLRAALGRPPLLLLDDVSSELDPAKNRFLLGYLAALPAQAFLTTTDRRLIEPAAGPDTAFYEVRSGVVSPLVS.

30 to 37 (GENGQGKT) serves as a coordination point for ATP.

The protein belongs to the RecF family.

The protein resides in the cytoplasm. The RecF protein is involved in DNA metabolism; it is required for DNA replication and normal SOS inducibility. RecF binds preferentially to single-stranded, linear DNA. It also seems to bind ATP. The protein is DNA replication and repair protein RecF of Anaeromyxobacter dehalogenans (strain 2CP-C).